The following is a 1342-amino-acid chain: DNA-directed RNA polymerase subunit beta (1342 aa).

It belongs to the RNA polymerase beta chain family. As to quaternary structure, the RNAP catalytic core consists of 2 alpha, 1 beta, 1 beta' and 1 omega subunit. When a sigma factor is associated with the core the holoenzyme is formed, which can initiate transcription.

The enzyme catalyses RNA(n) + a ribonucleoside 5'-triphosphate = RNA(n+1) + diphosphate. DNA-dependent RNA polymerase catalyzes the transcription of DNA into RNA using the four ribonucleoside triphosphates as substrates. In Photorhabdus laumondii subsp. laumondii (strain DSM 15139 / CIP 105565 / TT01) (Photorhabdus luminescens subsp. laumondii), this protein is DNA-directed RNA polymerase subunit beta.